A 1044-amino-acid chain; its full sequence is Sarcoplasmic/endoplasmic reticulum calcium ATPase 2 (1044 aa).

Over 1 to 48 the chain is Cytoplasmic; it reads MENAHTKTVEEVLGHFGVNESTGLSLEQVKKLKERWGSNELPAEEGKT. A Phosphoserine modification is found at serine 38. A helical transmembrane segment spans residues 49–69; the sequence is LLELVIEQFEDLLVRILLLAA. Residues 70 to 89 are Lumenal-facing; sequence CISFVLAWFEEGEETITAFV. A helical transmembrane segment spans residues 90–110; sequence EPFVILLILVANAIVGVWQER. The Cytoplasmic segment spans residues 111–253; that stretch reads NAENAIEALK…QERTPLQQKL (143 aa). The chain crosses the membrane as a helical span at residues 254–273; it reads DEFGEQLSKVISLICIAVWI. Topologically, residues 274–295 are lumenal; sequence INIGHFNDPVHGGSWIRGAIYY. Tyrosine 294 and tyrosine 295 each carry 3'-nitrotyrosine. The helical transmembrane segment at 296 to 313 threads the bilayer; it reads FKIAVALAVAAIPEGLPA. Residues valine 304, alanine 305, isoleucine 307, and glutamate 309 each coordinate Ca(2+). The Cytoplasmic segment spans residues 314–756; it reads VITTCLALGT…EEGRAIYNNM (443 aa). The 4-aspartylphosphate intermediate role is filled by aspartate 351. 2 residues coordinate Mg(2+): aspartate 351 and threonine 353. Threonine 353 provides a ligand contact to ATP. Position 441 is a phosphothreonine (threonine 441). Residues glutamate 442, arginine 489, and lysine 514 each contribute to the ATP site. Serine 531 is subject to Phosphoserine. Position 559 (arginine 559) interacts with ATP. The tract at residues 575 to 594 is interaction with HAX1; it reads MHLEDSANFIKYETNLTFVG. The residue at position 580 (serine 580) is a Phosphoserine. Threonine 624, glycine 625, and aspartate 626 together coordinate ATP. Serine 661 and serine 663 each carry phosphoserine. Arginine 677 and lysine 683 together coordinate ATP. Aspartate 702 lines the Mg(2+) pocket. Residue asparagine 705 coordinates ATP. Residues 757 to 776 traverse the membrane as a helical segment; sequence KQFIRYLISSNVGEVVCIFL. Residues asparagine 767 and glutamate 770 each contribute to the Ca(2+) site. Residues 777–786 lie on the Lumenal side of the membrane; that stretch reads TAALGFPEAL. Residues 787–807 traverse the membrane as a helical segment; sequence IPVQLLWVNLVTDGLPATALG. The segment at 787 to 807 is interaction with PLN; that stretch reads IPVQLLWVNLVTDGLPATALG. Residues 788–1044 form an interaction with TMEM64 and PDIA3 region; that stretch reads PVQLLWVNLV…DTNFSDMFWS (257 aa). Residues asparagine 795, threonine 798, and aspartate 799 each contribute to the Ca(2+) site. Over 808–827 the chain is Cytoplasmic; it reads FNPPDLDIMNKPPRNPKEPL. The chain crosses the membrane as a helical span at residues 828–850; sequence ISGWLFFRYLAIGCYVGAATVGA. At 851–896 the chain is on the lumenal side; the sequence is AAWWFIAADGGPRVSFYQLSHFLQCKEDNPDFDGVDCAIFESPYPM. Cysteine 875 and cysteine 887 are joined by a disulfide. A helical transmembrane segment spans residues 897-916; the sequence is TMALSVLVTIEMCNALNSLS. Position 907 (glutamate 907) interacts with Ca(2+). Topologically, residues 917 to 929 are cytoplasmic; that stretch reads ENQSLLRMPPWEN. A helical membrane pass occupies residues 930–948; that stretch reads IWLVGSICLSMSLHFLILY. An interaction with PLN region spans residues 931–942; the sequence is WLVGSICLSMSL. Residues 949-963 are Lumenal-facing; that stretch reads VEPLPLIFQITPLNL. The chain crosses the membrane as a helical span at residues 964-984; the sequence is TQWLMVLKISLPVILMDETLK. At 985-1044 the chain is on the cytoplasmic side; sequence FVARNYLEQPGKECVQPATKSSCSLSACTDGISWPFVLLIMPLVVWVYSTDTNFSDMFWS.

It belongs to the cation transport ATPase (P-type) (TC 3.A.3) family. Type IIA subfamily. As to quaternary structure, interacts with sarcolipin (SLN); the interaction inhibits ATP2A2 Ca(2+) affinity. Interacts with phospholamban (PLN); the interaction inhibits ATP2A2 Ca(2+) affinity. Interacts with myoregulin (MRLN). Interacts with ARLN and ERLN; the interactions inhibit ATP2A2 Ca(2+) affinity. Interacts with STRIT1/DWORF; the interaction results in activation of ATP2A2. Interacts with the monomeric forms of SLN, PLN, ARLN, ERLN and STRI1/DWORF. Interacts with HAX1. Interacts with S100A8 and S100A9. Interacts with SLC35G1 and STIM1. Interacts with TMEM203. Interacts with TMEM64 and PDIA3. Interacts with TMX1. Interacts with TMX2. Interacts with VMP1; VMP1 competes with PLN and SLN to prevent them from forming an inhibitory complex with ATP2A2. Interacts with ULK1. Interacts with S100A1 in a Ca(2+)-dependent manner. Interacts with TUNAR. Interacts with FLVCR2; this interaction occurs in the absence of heme and promotes ATP2A2 proteasomal degradation; this complex is dissociated upon heme binding. Interacts with FNIP1. Interacts with TRAM2 (via C-terminus). Mg(2+) serves as cofactor. Post-translationally, nitrated under oxidative stress. Nitration on the two tyrosine residues inhibits catalytic activity. Serotonylated on Gln residues by TGM2 in response to hypoxia, leading to its inactivation. As to expression, isoform 2 is highly expressed in heart and slow twitch skeletal muscle. Isoform 2 is widely expressed.

It is found in the endoplasmic reticulum membrane. The protein localises to the sarcoplasmic reticulum membrane. It carries out the reaction Ca(2+)(in) + ATP + H2O = Ca(2+)(out) + ADP + phosphate + H(+). With respect to regulation, has different conformational states with differential Ca2+ affinity. The E1 conformational state (active form) shows high Ca(2+) affinity, while the E2 state exhibits low Ca(2+) affinity. Binding of ATP allosterically increases its affinity for subsequent binding of Ca2+. Reversibly inhibited by phospholamban (PLN) at low calcium concentrations. PLN inhibits ATP2A2 Ca(2+) affinity by disrupting its allosteric activation by ATP. Inhibited by sarcolipin (SLN) and myoregulin (MRLN). The inhibition is blocked by VMP1. Enhanced by STRIT1/DWORF; STRIT1 increases activity by displacing sarcolipin (SLN), phospholamban (PLN) and myoregulin (MRLN). Stabilizes SERCA2 in its E2 state. Functionally, this magnesium-dependent enzyme catalyzes the hydrolysis of ATP coupled with the translocation of calcium from the cytosol to the sarcoplasmic reticulum lumen. Involved in autophagy in response to starvation. Upon interaction with VMP1 and activation, controls ER-isolation membrane contacts for autophagosome formation. Also modulates ER contacts with lipid droplets, mitochondria and endosomes. In coordination with FLVCR2 mediates heme-stimulated switching from mitochondrial ATP synthesis to thermogenesis. Involved in the regulation of the contraction/relaxation cycle. Acts as a regulator of TNFSF11-mediated Ca(2+) signaling pathways via its interaction with TMEM64 which is critical for the TNFSF11-induced CREB1 activation and mitochondrial ROS generation necessary for proper osteoclast generation. Association between TMEM64 and SERCA2 in the ER leads to cytosolic Ca(2+) spiking for activation of NFATC1 and production of mitochondrial ROS, thereby triggering Ca(2+) signaling cascades that promote osteoclast differentiation and activation. This Mus musculus (Mouse) protein is Sarcoplasmic/endoplasmic reticulum calcium ATPase 2.